We begin with the raw amino-acid sequence, 384 residues long: Guanine nucleotide-binding protein alpha-1 subunit (384 aa).

The N-myristoyl glycine moiety is linked to residue Gly-2. Cys-5 carries the S-palmitoyl cysteine lipid modification. The 347-residue stretch at 38 to 384 folds into the G-alpha domain; the sequence is HIQKLLLLGA…RRNLFEAGLL (347 aa). The interval 41 to 54 is G1 motif; it reads KLLLLGAGESGKST. Glu-49, Ser-50, Gly-51, Lys-52, Ser-53, Thr-54, Leu-188, Tyr-189, Thr-194, Gly-222, Asn-288, Lys-289, Asp-291, and Ala-356 together coordinate GTP. Ser-53 contacts Mg(2+). The tract at residues 186 to 194 is G2 motif; sequence DVLYARVRT. Position 194 (Thr-194) interacts with Mg(2+). A G3 motif region spans residues 215–224; it reads YRLFDVGGQR. Residues 284–291 form a G4 motif region; it reads MLFLNKFD. The tract at residues 354–359 is G5 motif; it reads TTALDQ.

This sequence belongs to the G-alpha family. As to quaternary structure, g proteins are composed of 3 units; alpha, beta and gamma. The alpha chain contains the guanine nucleotide binding site. The cofactor is Mg(2+).

In terms of biological role, guanine nucleotide-binding proteins (G proteins) are involved as modulators or transducers in various transmembrane signaling systems. The chain is Guanine nucleotide-binding protein alpha-1 subunit (GPA1) from Lupinus luteus (European yellow lupine).